The primary structure comprises 62 residues: MKTIVLLFVLALVFCTLEMGIVEAGFGCPFNQGQCHKHCQSIRRRGGYCDGFLKQRCVCYRK.

A signal peptide spans 1–24 (MKTIVLLFVLALVFCTLEMGIVEA). Disulfide bonds link Cys-28–Cys-49, Cys-35–Cys-57, and Cys-39–Cys-59.

It belongs to the invertebrate defensin family. Type 2 subfamily.

The protein resides in the secreted. Dual-function peptide with antimicrobial and potassium channel-blocking activities. Shows inhibitory activity against Gram-positive bacteria such as S.aureus, B.subtilis, and M.luteus as well as methicillin-resistant S.aureus (MIC=0.1-20 uM). Does not act on bacteria by disrupting membranes. Also moderately inhibits Kv1.1/KCNA1 (25.2% inhibition at 1 uM), Kv1.2/KCNA2 (30.5% inhibition at 1 uM), and Kv1.3/KCNA3 potassium channels (IC(50)=510.2 nM, 61% inhibition at 1 uM). Inhibits potassium channels by interacting with the pore region. Does not show hemolytic activity. In vitro, dose-dependently decreases the production of Hepatitis B virus (HBV) DNA and HBV viral proteins in both culture medium and cell lysate. In Olivierus martensii (Manchurian scorpion), this protein is Defensin BmKDfsin4.